Consider the following 531-residue polypeptide: Importin subunit alpha-2 (531 aa).

The segment covering 1 to 10 has biased composition (polar residues); the sequence is MTLTETSLSH. The tract at residues 1 to 88 is disordered; it reads MTLTETSLSH…ISHQQSSTRL (88 aa). An IBB domain is found at 5 to 67; that stretch reads ETSLSHNAEE…RNIVDVDEGG (63 aa). Composition is skewed to basic and acidic residues over residues 11–20 and 29–50; these read NAEEGKDEGG and TKHE…KQKG. Acidic residues predominate over residues 62–75; it reads DVDEGGNSESELEE. ARM repeat units follow at residues 122–161, 164–203, 250–290, 293–331, 334–374, 377–416, and 420–459; these read NPPI…NIVS, TEQT…NIAG, KNPH…YLTD, DEQI…NVAT, DSLT…NIIA, QKQI…NLAQ, and NRQV…TLML. The interval 511 to 531 is disordered; it reads DDAGEKESHENADPQDNKWSF. Over residues 515–531 the composition is skewed to basic and acidic residues; sequence EKESHENADPQDNKWSF.

It belongs to the importin alpha family. In terms of assembly, forms a complex with an importin beta subunit. Interacts with akir-1. Germline tissues. Expressed exclusively in germ line cells from the early embryonic through adult stages.

It localises to the cytoplasm. The protein resides in the nucleus. It is found in the nucleus envelope. In terms of biological role, nuclear transport receptor that mediates nuclear import of proteins, and which is involved in sister chromatid cohesion. Binds specifically and directly to substrates containing either a simple or bipartite nuclear localization signals (NLS) motif. Promotes docking of import substrates to the nuclear envelope. Together with akir-1 adapter, required for the import and load of cohesin complex proteins in meiotic nuclei. This Caenorhabditis elegans protein is Importin subunit alpha-2.